A 739-amino-acid polypeptide reads, in one-letter code: Adenosylcobalamin-dependent ribonucleoside-triphosphate reductase (739 aa).

Cys119 and Cys419 form a disulfide bridge. Residues 147 to 158 are effector region-1; it reads SMPFSFLFDELM. Residues 168 to 313 form an effector region-2 region; that stretch reads ARSNISQIPR…ICNLIGKAVV (146 aa). Active-site residues include Cys408 and Glu410. The segment at 565–626 is adenosylcobalamin-binding-1; that stretch reads FHYGAYLIQR…NPNFASAGTV (62 aa). The adenosylcobalamin-binding-2 stretch occupies residues 685–724; sequence LQQAPKEPIDKETYEKRSQEITGNVEEVFSQLNSDVKDLE.

Belongs to the class II ribonucleoside-triphosphate reductase family. In terms of assembly, monomer. Requires adenosylcob(III)alamin as cofactor.

It carries out the reaction a 2'-deoxyribonucleoside 5'-triphosphate + [thioredoxin]-disulfide + H2O = a ribonucleoside 5'-triphosphate + [thioredoxin]-dithiol. Its activity is regulated as follows. Allosterically regulated by ATP and dNTP. The polypeptide is Adenosylcobalamin-dependent ribonucleoside-triphosphate reductase (rtpR) (Lactobacillus delbrueckii subsp. bulgaricus (strain ATCC 11842 / DSM 20081 / BCRC 10696 / JCM 1002 / NBRC 13953 / NCIMB 11778 / NCTC 12712 / WDCM 00102 / Lb 14)).